The sequence spans 78 residues: Acyl carrier protein (78 aa).

A Carrier domain is found at 1–76 (MALFEDIQAV…DVVKYIEDNK (76 aa)). Ser36 carries the O-(pantetheine 4'-phosphoryl)serine modification.

Belongs to the acyl carrier protein (ACP) family. Post-translationally, 4'-phosphopantetheine is transferred from CoA to a specific serine of apo-ACP by AcpS. This modification is essential for activity because fatty acids are bound in thioester linkage to the sulfhydryl of the prosthetic group.

The protein localises to the cytoplasm. It participates in lipid metabolism; fatty acid biosynthesis. Carrier of the growing fatty acid chain in fatty acid biosynthesis. The sequence is that of Acyl carrier protein from Helicobacter pylori (strain J99 / ATCC 700824) (Campylobacter pylori J99).